A 355-amino-acid chain; its full sequence is Anthranilate phosphoribosyltransferase (355 aa).

5-phospho-alpha-D-ribose 1-diphosphate is bound by residues glycine 91, 94 to 95 (GD), threonine 99, 101 to 104 (NIST), 119 to 127 (KHGNRAMSS), and alanine 131. Glycine 91 is an anthranilate binding site. Residue serine 103 coordinates Mg(2+). Asparagine 122 contacts anthranilate. Arginine 177 is a binding site for anthranilate. Mg(2+)-binding residues include aspartate 234 and glutamate 235.

The protein belongs to the anthranilate phosphoribosyltransferase family. Homodimer. Mg(2+) serves as cofactor.

The enzyme catalyses N-(5-phospho-beta-D-ribosyl)anthranilate + diphosphate = 5-phospho-alpha-D-ribose 1-diphosphate + anthranilate. It participates in amino-acid biosynthesis; L-tryptophan biosynthesis; L-tryptophan from chorismate: step 2/5. Its function is as follows. Participates in the tryptophan-dependent indole-3-acetic acid production, which is a phytohormone released by A.brasilense. Functionally, catalyzes the transfer of the phosphoribosyl group of 5-phosphorylribose-1-pyrophosphate (PRPP) to anthranilate to yield N-(5'-phosphoribosyl)-anthranilate (PRA). This Azospirillum brasilense protein is Anthranilate phosphoribosyltransferase.